We begin with the raw amino-acid sequence, 311 residues long: 33 kDa chaperonin (311 aa).

2 disulfides stabilise this stretch: C240/C242 and C273/C276.

It belongs to the HSP33 family. In terms of processing, under oxidizing conditions two disulfide bonds are formed involving the reactive cysteines. Under reducing conditions zinc is bound to the reactive cysteines and the protein is inactive.

Its subcellular location is the cytoplasm. Functionally, redox regulated molecular chaperone. Protects both thermally unfolding and oxidatively damaged proteins from irreversible aggregation. Plays an important role in the bacterial defense system toward oxidative stress. This Trichodesmium erythraeum (strain IMS101) protein is 33 kDa chaperonin.